The chain runs to 957 residues: ERC protein 2 (957 aa).

Positions 1-13 are enriched in polar residues; sequence MYGSARTISNPEG. The disordered stretch occupies residues 1–44; sequence MYGSARTISNPEGSPSRSPRLPRSPRLGHRRTSSGGGGGTGKTL. Positions 14 to 25 are enriched in low complexity; the sequence is SPSRSPRLPRSP. Phosphoserine occurs at positions 65 and 666. Residues 140–917 are a coiled coil; the sequence is RQVRDSTMLD…RMKLMADNYD (778 aa). The tract at residues 760–957 is involved in binding to RIMS1; sequence DQNKKVANLK…DQDDEEGIWA (198 aa). Residues 918-957 are disordered; the sequence is DDHHHYHHHHHHHHHRSPGRSQHSNHRPSPDQDDEEGIWA. The segment covering 922–943 has biased composition (basic residues); it reads HYHHHHHHHHHRSPGRSQHSNH. Positions 948–957 are enriched in acidic residues; the sequence is DQDDEEGIWA.

As to quaternary structure, interacts with BSN, ERC1, PPFIA1, PPFIA2, PPFIA3 and PPFIA4. Interacts through its C-terminus with the PDZ domain of RIMS1. Part of a complex consisting of ERC2, RIMS1 and UNC13A. In terms of tissue distribution, predominantly expressed in brain, including hippocampus, cortex, cerebellum, amygdala and olfactory bulb.

The protein resides in the cytoplasm. It localises to the synapse. The protein localises to the presynaptic active zone. Its subcellular location is the cytoskeleton. Its function is as follows. Thought to be involved in the organization of the cytomatrix at the nerve terminals active zone (CAZ) which regulates neurotransmitter release. Seems to act together with BSN. May recruit liprin-alpha proteins to the CAZ. The protein is ERC protein 2 (Erc2) of Rattus norvegicus (Rat).